Reading from the N-terminus, the 458-residue chain is UDP-N-acetylglucosamine 1-carboxyvinyltransferase (458 aa).

22–23 (KN) is a binding site for phosphoenolpyruvate. A UDP-N-acetyl-alpha-D-glucosamine-binding site is contributed by arginine 94. Aspartate 119 acts as the Proton donor in catalysis. UDP-N-acetyl-alpha-D-glucosamine-binding residues include aspartate 309 and valine 331.

Belongs to the EPSP synthase family. MurA subfamily.

It is found in the cytoplasm. The catalysed reaction is phosphoenolpyruvate + UDP-N-acetyl-alpha-D-glucosamine = UDP-N-acetyl-3-O-(1-carboxyvinyl)-alpha-D-glucosamine + phosphate. Its pathway is cell wall biogenesis; peptidoglycan biosynthesis. Cell wall formation. Adds enolpyruvyl to UDP-N-acetylglucosamine. The sequence is that of UDP-N-acetylglucosamine 1-carboxyvinyltransferase from Chlamydia pneumoniae (Chlamydophila pneumoniae).